The primary structure comprises 88 residues: Period circadian protein (88 aa).

Positions 23–88 are disordered; sequence VTNTSIAGTG…VTLTESLLNK (66 aa). 16 repeat units span residues 30-31, 33-34, 35-36, 37-38, 39-40, 41-42, 43-44, 45-46, 47-48, 49-50, 51-52, 53-54, 55-56, 57-58, 59-60, and 61-62. The segment at 30 to 62 is 16 X 2 AA tandem repeats of G-[TN]; it reads GTGGTGTGTGTGTGTGTGTGTGTGTGTGTGTGN. Over residues 30 to 62 the composition is skewed to gly residues; the sequence is GTGGTGTGTGTGTGTGTGTGTGTGTGTGTGTGN. The segment covering 79–88 has biased composition (polar residues); sequence VTLTESLLNK.

As to quaternary structure, forms a heterodimer with timeless (TIM); the complex then translocates into the nucleus. Phosphorylated with a circadian rhythmicity, probably by the double-time protein (dbt). Phosphorylation could be implicated in the stability of per monomer and in the formation of heterodimer per-tim.

Its subcellular location is the nucleus. It localises to the cytoplasm. The protein resides in the perinuclear region. In terms of biological role, essential for biological clock functions. Determines the period length of circadian and ultradian rhythms; an increase in PER dosage leads to shortened circadian rhythms and a decrease leads to lengthened circadian rhythms. Essential for the circadian rhythmicity of locomotor activity, eclosion behavior, and for the rhythmic component of the male courtship song that originates in the thoracic nervous system. The biological cycle depends on the rhythmic formation and nuclear localization of the TIM-PER complex. Light induces the degradation of TIM, which promotes elimination of PER. Nuclear activity of the heterodimer coordinatively regulates PER and TIM transcription through a negative feedback loop. Behaves as a negative element in circadian transcriptional loop. Does not appear to bind DNA, suggesting indirect transcriptional inhibition. The chain is Period circadian protein (per) from Drosophila teissieri (Fruit fly).